The following is a 113-amino-acid chain: DNA-binding protein Mevan_1162 (113 aa).

Over residues 1-12 (MDPEEIKQKKLQ) the composition is skewed to basic and acidic residues. Residues 1–22 (MDPEEIKQKKLQEMQAKAQDPE) form a disordered region.

This sequence belongs to the PDCD5 family.

The polypeptide is DNA-binding protein Mevan_1162 (Methanococcus vannielii (strain ATCC 35089 / DSM 1224 / JCM 13029 / OCM 148 / SB)).